A 128-amino-acid polypeptide reads, in one-letter code: UPF0325 protein NT01EI_0832 (128 aa).

Belongs to the UPF0325 family.

The protein is UPF0325 protein NT01EI_0832 of Edwardsiella ictaluri (strain 93-146).